The primary structure comprises 338 residues: Sesquiterpene synthase 1 (338 aa).

Positions 93, 228, 232, and 236 each coordinate Mg(2+). The short motif at 93-97 is the DDXXD motif element; that stretch reads DNISD. The short motif at 228 to 236 is the NSE/DTE motif element; sequence NDIFSYNVE. (2E,6E)-farnesyl diphosphate is bound by residues Arg-316 and Tyr-317.

The protein belongs to the terpene synthase family. It depends on Mg(2+) as a cofactor.

It catalyses the reaction (2E,6E)-farnesyl diphosphate = alpha-copaene + diphosphate. The enzyme catalyses (2E,6E)-farnesyl diphosphate = beta-copaene + diphosphate. It carries out the reaction (2E,6E)-farnesyl diphosphate = alpha-muurolene + diphosphate. The catalysed reaction is (2E,6E)-farnesyl diphosphate = gamma-muurolene + diphosphate. It catalyses the reaction (2E,6E)-farnesyl diphosphate = delta-cadinene + diphosphate. Its function is as follows. Terpene cyclase that catalyzes the cyclization of farnesyl diphosphate (FPP) to various sesquiterpenes, including alpha-copaene, beta-copaene, beta-elemene, alpha-muurolene, gamma-muurolene and delta-cadinene. In Postia placenta (strain ATCC 44394 / Madison 698-R) (Brown rot fungus), this protein is Sesquiterpene synthase 1.